Here is a 143-residue protein sequence, read N- to C-terminus: UPF0201 protein Tneu_0685 (143 aa).

Belongs to the UPF0201 family.

The chain is UPF0201 protein Tneu_0685 from Pyrobaculum neutrophilum (strain DSM 2338 / JCM 9278 / NBRC 100436 / V24Sta) (Thermoproteus neutrophilus).